Reading from the N-terminus, the 288-residue chain is Elongation factor Ts (288 aa).

The interval 82-85 is involved in Mg(2+) ion dislocation from EF-Tu; the sequence is TDFV.

The protein belongs to the EF-Ts family.

It is found in the cytoplasm. Functionally, associates with the EF-Tu.GDP complex and induces the exchange of GDP to GTP. It remains bound to the aminoacyl-tRNA.EF-Tu.GTP complex up to the GTP hydrolysis stage on the ribosome. The polypeptide is Elongation factor Ts (Chlorobaculum tepidum (strain ATCC 49652 / DSM 12025 / NBRC 103806 / TLS) (Chlorobium tepidum)).